We begin with the raw amino-acid sequence, 24 residues long: Erythromycin resistance leader peptide (24 aa).

Residues 1 to 14 (MSMGIAARPPRAAL) are compositionally biased toward low complexity. The tract at residues 1–24 (MSMGIAARPPRAALLPPPSVPRSR) is disordered. Residues 15–24 (LPPPSVPRSR) are compositionally biased toward pro residues.

This peptide is involved in the control mechanism of the synthesis of the macrolide-lincosamide-streptogramin B resistance protein. This is Erythromycin resistance leader peptide from Streptomyces fradiae (Streptomyces roseoflavus).